The chain runs to 254 residues: Triosephosphate isomerase (254 aa).

Asn-12 to Lys-14 contacts substrate. The active-site Electrophile is His-99. The active-site Proton acceptor is Glu-169. Substrate-binding positions include Gly-175, Ser-214, and Gly-235 to Gly-236.

This sequence belongs to the triosephosphate isomerase family. Homodimer.

Its subcellular location is the cytoplasm. It catalyses the reaction D-glyceraldehyde 3-phosphate = dihydroxyacetone phosphate. It participates in carbohydrate biosynthesis; gluconeogenesis. Its pathway is carbohydrate degradation; glycolysis; D-glyceraldehyde 3-phosphate from glycerone phosphate: step 1/1. In terms of biological role, involved in the gluconeogenesis. Catalyzes stereospecifically the conversion of dihydroxyacetone phosphate (DHAP) to D-glyceraldehyde-3-phosphate (G3P). This Brucella melitensis biotype 1 (strain ATCC 23456 / CCUG 17765 / NCTC 10094 / 16M) protein is Triosephosphate isomerase.